Consider the following 398-residue polypeptide: Dual-specificity RNA methyltransferase RlmN (398 aa).

Glu-121 acts as the Proton acceptor in catalysis. One can recognise a Radical SAM core domain in the interval 127–370 (ETDRGTLCVS…VRTPRGRDIL (244 aa)). Cysteines 134 and 373 form a disulfide. Residues Cys-141, Cys-145, and Cys-148 each coordinate [4Fe-4S] cluster. S-adenosyl-L-methionine-binding positions include 199–200 (GE), Ser-231, 253–255 (SLH), and Asn-330. Cys-373 (S-methylcysteine intermediate) is an active-site residue.

The protein belongs to the radical SAM superfamily. RlmN family. Requires [4Fe-4S] cluster as cofactor.

It is found in the cytoplasm. It catalyses the reaction adenosine(2503) in 23S rRNA + 2 reduced [2Fe-2S]-[ferredoxin] + 2 S-adenosyl-L-methionine = 2-methyladenosine(2503) in 23S rRNA + 5'-deoxyadenosine + L-methionine + 2 oxidized [2Fe-2S]-[ferredoxin] + S-adenosyl-L-homocysteine. The enzyme catalyses adenosine(37) in tRNA + 2 reduced [2Fe-2S]-[ferredoxin] + 2 S-adenosyl-L-methionine = 2-methyladenosine(37) in tRNA + 5'-deoxyadenosine + L-methionine + 2 oxidized [2Fe-2S]-[ferredoxin] + S-adenosyl-L-homocysteine. Specifically methylates position 2 of adenine 2503 in 23S rRNA and position 2 of adenine 37 in tRNAs. m2A2503 modification seems to play a crucial role in the proofreading step occurring at the peptidyl transferase center and thus would serve to optimize ribosomal fidelity. The polypeptide is Dual-specificity RNA methyltransferase RlmN (Rhodopseudomonas palustris (strain BisB5)).